Here is a 152-residue protein sequence, read N- to C-terminus: Ribosome maturation factor RimP (152 aa).

Belongs to the RimP family.

It localises to the cytoplasm. In terms of biological role, required for maturation of 30S ribosomal subunits. The sequence is that of Ribosome maturation factor RimP from Yersinia pestis.